Reading from the N-terminus, the 139-residue chain is ATP synthase epsilon chain (139 aa).

The protein belongs to the ATPase epsilon chain family. In terms of assembly, F-type ATPases have 2 components, CF(1) - the catalytic core - and CF(0) - the membrane proton channel. CF(1) has five subunits: alpha(3), beta(3), gamma(1), delta(1), epsilon(1). CF(0) has three main subunits: a, b and c.

The protein resides in the cell inner membrane. In terms of biological role, produces ATP from ADP in the presence of a proton gradient across the membrane. This chain is ATP synthase epsilon chain, found in Actinobacillus pleuropneumoniae serotype 5b (strain L20).